Here is a 780-residue protein sequence, read N- to C-terminus: B3 domain-containing transcription repressor VAL2 (780 aa).

Positions 286–387 (FEKVLSASDA…KLVMGYRKAT (102 aa)) form a DNA-binding region, TF-B3. Residues 515–565 (TGEQEQWVQCDACGKWRQLPVDILLPPKWSCSDNLLDPGRSSCSAPDELSP) form a CW-type zinc finger. The Zn(2+) site is built by C524, C527, C545, and C557. 3 disordered regions span residues 577-608 (EFKR…AGIT), 669-695 (KRNK…TEVE), and 743-780 (NTAG…DPVN). Residues 584–603 (ASSNEKLNQSQDASALNSLG) show a composition bias toward polar residues. Positions 674 to 686 (EAGQASQQAQSQS) are enriched in low complexity. Over residues 743-765 (NTAGEQQSSDMVSTEHGSSSAAQ) the composition is skewed to polar residues.

It localises to the nucleus. Its function is as follows. Transcriptional repressor of gene expression involved in embryonic pathways, such as LEC1, ABI3, and FUS3. Repressor of the sugar-inducible genes involved in the seed maturation program in seedlings. Plays an essential role in regulating the transition from seed maturation to seedling growth. Functionally redundant with VAL1/HSI2. The protein is B3 domain-containing transcription repressor VAL2 (VAL2) of Arabidopsis thaliana (Mouse-ear cress).